We begin with the raw amino-acid sequence, 252 residues long: Small ribosomal subunit protein uS3 (252 aa).

Residues 39–109 (IRNYVQTRLK…EVKIDVVEVV (71 aa)) form the KH type-2 domain. The segment covering 221–241 (EMKRIKERRSDSGPRSRNDRS) has biased composition (basic and acidic residues). Residues 221–252 (EMKRIKERRSDSGPRSRNDRSQKRRRRPNDRG) are disordered. Residues 242 to 252 (QKRRRRPNDRG) are compositionally biased toward basic residues.

It belongs to the universal ribosomal protein uS3 family. Part of the 30S ribosomal subunit. Forms a tight complex with proteins S10 and S14.

Binds the lower part of the 30S subunit head. Binds mRNA in the 70S ribosome, positioning it for translation. This is Small ribosomal subunit protein uS3 from Chlorobium luteolum (strain DSM 273 / BCRC 81028 / 2530) (Pelodictyon luteolum).